Consider the following 283-residue polypeptide: Succinate dehydrogenase [ubiquinone] iron-sulfur subunit, mitochondrial (283 aa).

A 2Fe-2S ferredoxin-type domain is found at 66–145 (KKPTLQTYSI…PVKIYPLPHM (80 aa)). Cysteine 105, cysteine 110, cysteine 113, and cysteine 125 together coordinate [2Fe-2S] cluster. One can recognise a 4Fe-4S ferredoxin-type domain in the interval 186–216 (DRKKLDGMYECILCACCSTSCPSYWWNQDEY). [4Fe-4S] cluster contacts are provided by cysteine 196, cysteine 199, and cysteine 202. Cysteine 206 contributes to the [3Fe-4S] cluster binding site. Tryptophan 211 lines the a ubiquinone pocket. [3Fe-4S] cluster is bound by residues cysteine 253 and cysteine 259. [4Fe-4S] cluster is bound at residue cysteine 263.

This sequence belongs to the succinate dehydrogenase/fumarate reductase iron-sulfur protein family. In terms of assembly, component of complex II composed of four subunits: a flavoprotein (FP), an iron-sulfur protein (IP), and a cytochrome b composed of a large and a small subunit. [2Fe-2S] cluster is required as a cofactor. The cofactor is [3Fe-4S] cluster. It depends on [4Fe-4S] cluster as a cofactor.

It is found in the mitochondrion inner membrane. It catalyses the reaction a quinone + succinate = fumarate + a quinol. Its pathway is carbohydrate metabolism; tricarboxylic acid cycle; fumarate from succinate (eukaryal route): step 1/1. In terms of biological role, iron-sulfur protein (IP) subunit of succinate dehydrogenase (SDH) that is involved in complex II of the mitochondrial electron transport chain and is responsible for transferring electrons from succinate to ubiquinone (coenzyme Q). The polypeptide is Succinate dehydrogenase [ubiquinone] iron-sulfur subunit, mitochondrial (SDH2) (Uromyces fabae (Rust fungus)).